The sequence spans 217 residues: Deoxyribose-phosphate aldolase (217 aa).

The active-site Proton donor/acceptor is Asp89. Lys151 acts as the Schiff-base intermediate with acetaldehyde in catalysis. The Proton donor/acceptor role is filled by Lys180.

This sequence belongs to the DeoC/FbaB aldolase family. DeoC type 1 subfamily.

The protein resides in the cytoplasm. It catalyses the reaction 2-deoxy-D-ribose 5-phosphate = D-glyceraldehyde 3-phosphate + acetaldehyde. It participates in carbohydrate degradation; 2-deoxy-D-ribose 1-phosphate degradation; D-glyceraldehyde 3-phosphate and acetaldehyde from 2-deoxy-alpha-D-ribose 1-phosphate: step 2/2. Catalyzes a reversible aldol reaction between acetaldehyde and D-glyceraldehyde 3-phosphate to generate 2-deoxy-D-ribose 5-phosphate. In Mycoplasma mobile (strain ATCC 43663 / 163K / NCTC 11711) (Mesomycoplasma mobile), this protein is Deoxyribose-phosphate aldolase.